A 111-amino-acid polypeptide reads, in one-letter code: Cytochrome c6 (111 aa).

The signal sequence occupies residues 1-25; it reads MKRLLSLIFLVFVFFAVMLTPPALA. Residues Cys-39, Cys-42, His-43, and Met-83 each coordinate heme c.

It belongs to the cytochrome c family. PetJ subfamily. Monomer. Binds 1 heme c group covalently per subunit.

It is found in the cellular thylakoid lumen. Its function is as follows. Functions as an electron carrier between membrane-bound cytochrome b6-f and photosystem I in oxygenic photosynthesis. This chain is Cytochrome c6, found in Rippkaea orientalis (strain PCC 8801 / RF-1) (Cyanothece sp. (strain PCC 8801)).